The primary structure comprises 757 residues: 5-methyltetrahydropteroyltriglutamate--homocysteine methyltransferase (757 aa).

5-methyltetrahydropteroyltri-L-glutamate-binding positions include 17 to 20 (RELK) and lysine 117. L-homocysteine contacts are provided by residues 432–434 (IGS) and glutamate 485. L-methionine-binding positions include 432-434 (IGS) and glutamate 485. 5-methyltetrahydropteroyltri-L-glutamate-binding positions include 516–517 (RC) and tryptophan 562. Aspartate 600 contributes to the L-homocysteine binding site. Aspartate 600 is a binding site for L-methionine. Residue glutamate 606 participates in 5-methyltetrahydropteroyltri-L-glutamate binding. 3 residues coordinate Zn(2+): histidine 642, cysteine 644, and glutamate 666. Histidine 695 acts as the Proton donor in catalysis. Cysteine 727 is a Zn(2+) binding site.

It belongs to the vitamin-B12 independent methionine synthase family. Zn(2+) serves as cofactor.

It catalyses the reaction 5-methyltetrahydropteroyltri-L-glutamate + L-homocysteine = tetrahydropteroyltri-L-glutamate + L-methionine. It functions in the pathway amino-acid biosynthesis; L-methionine biosynthesis via de novo pathway; L-methionine from L-homocysteine (MetE route): step 1/1. In terms of biological role, catalyzes the transfer of a methyl group from 5-methyltetrahydrofolate to homocysteine resulting in methionine formation. The protein is 5-methyltetrahydropteroyltriglutamate--homocysteine methyltransferase of Erwinia tasmaniensis (strain DSM 17950 / CFBP 7177 / CIP 109463 / NCPPB 4357 / Et1/99).